A 401-amino-acid chain; its full sequence is Ornithine aminotransferase (401 aa).

N6-(pyridoxal phosphate)lysine is present on K258.

The protein belongs to the class-III pyridoxal-phosphate-dependent aminotransferase family. OAT subfamily. Requires pyridoxal 5'-phosphate as cofactor.

It is found in the cytoplasm. It carries out the reaction a 2-oxocarboxylate + L-ornithine = L-glutamate 5-semialdehyde + an L-alpha-amino acid. It functions in the pathway amino-acid biosynthesis; L-proline biosynthesis; L-glutamate 5-semialdehyde from L-ornithine: step 1/1. Its function is as follows. Catalyzes the interconversion of ornithine to glutamate semialdehyde. The polypeptide is Ornithine aminotransferase (Bacillus subtilis (strain 168)).